Consider the following 586-residue polypeptide: Arginine--tRNA ligase (586 aa).

The short motif at 131–141 is the 'HIGH' region element; that stretch reads ANPTGPMHVGH.

The protein belongs to the class-I aminoacyl-tRNA synthetase family. Monomer.

Its subcellular location is the cytoplasm. It catalyses the reaction tRNA(Arg) + L-arginine + ATP = L-arginyl-tRNA(Arg) + AMP + diphosphate. The sequence is that of Arginine--tRNA ligase from Azorhizobium caulinodans (strain ATCC 43989 / DSM 5975 / JCM 20966 / LMG 6465 / NBRC 14845 / NCIMB 13405 / ORS 571).